A 932-amino-acid polypeptide reads, in one-letter code: Protocadherin gamma-A8 (932 aa).

A signal peptide spans 1–29 (MAAPQSRPRRGELILLCALLGTLWEIGRG). 6 consecutive Cadherin domains span residues 30 to 133 (QIRY…NPKF), 134 to 242 (QVED…APVF), 243 to 347 (PHPI…RPEV), 348 to 452 (IITS…PPTF), 453 to 562 (PHAS…APEI), and 570 to 682 (DGST…KPSV). Residues 30-692 (QIRYSVPEET…DPNDSSLTLY (663 aa)) are Extracellular-facing. The N-linked (GlcNAc...) asparagine glycan is linked to Asn-47. 3 N-linked (GlcNAc...) asparagine glycosylation sites follow: Asn-414, Asn-419, and Asn-545. Residue Asn-685 is glycosylated (N-linked (GlcNAc...) asparagine). Residues 693–713 (LVVAVAAISCVFLAFVAVLLG) traverse the membrane as a helical segment. Topologically, residues 714–932 (LRLRRWHKSH…KKKSGKKEKK (219 aa)) are cytoplasmic. 2 disordered regions span residues 804–841 (ADHG…WPNN) and 902–932 (ATLT…KEKK). Over residues 810-841 (APPNTDWRFSQAQRPGTSGSQNGDDTGTWPNN) the composition is skewed to polar residues. A compositionally biased stretch (basic residues) spans 922–932 (NKKKSGKKEKK).

Its subcellular location is the cell membrane. In terms of biological role, potential calcium-dependent cell-adhesion protein. May be involved in the establishment and maintenance of specific neuronal connections in the brain. This chain is Protocadherin gamma-A8 (PCDHGA8), found in Pan troglodytes (Chimpanzee).